We begin with the raw amino-acid sequence, 202 residues long: Small ribosomal subunit protein uS4c (202 aa).

One can recognise an S4 RNA-binding domain in the interval 90–154 (MRLDNIIFRL…SQSIIIKNLN (65 aa)).

Belongs to the universal ribosomal protein uS4 family. In terms of assembly, part of the 30S ribosomal subunit. Contacts protein S5. The interaction surface between S4 and S5 is involved in control of translational fidelity.

The protein resides in the plastid. The protein localises to the chloroplast. One of the primary rRNA binding proteins, it binds directly to 16S rRNA where it nucleates assembly of the body of the 30S subunit. Its function is as follows. With S5 and S12 plays an important role in translational accuracy. In Marchantia polymorpha (Common liverwort), this protein is Small ribosomal subunit protein uS4c (rps4).